We begin with the raw amino-acid sequence, 282 residues long: Bis(5'-nucleosyl)-tetraphosphatase, symmetrical (282 aa).

Belongs to the Ap4A hydrolase family.

The enzyme catalyses P(1),P(4)-bis(5'-adenosyl) tetraphosphate + H2O = 2 ADP + 2 H(+). Hydrolyzes diadenosine 5',5'''-P1,P4-tetraphosphate to yield ADP. This Salmonella paratyphi C (strain RKS4594) protein is Bis(5'-nucleosyl)-tetraphosphatase, symmetrical.